The following is a 395-amino-acid chain: Phosphoribulokinase, chloroplastic (395 aa).

The N-terminal 46 residues, 1 to 46 (MAVSTIYSTQALNSTHFLTSSSSSKQVFLYRRQPQTNRRFNTLITC), are a transit peptide targeting the chloroplast. Cysteine 61 and cysteine 100 are oxidised to a cystine.

Belongs to the phosphoribulokinase family.

It is found in the plastid. The protein resides in the chloroplast. The enzyme catalyses D-ribulose 5-phosphate + ATP = D-ribulose 1,5-bisphosphate + ADP + H(+). The protein operates within carbohydrate biosynthesis; Calvin cycle. Its activity is regulated as follows. Light regulated via thioredoxin by reversible oxidation/reduction of sulfhydryl/disulfide groups. The polypeptide is Phosphoribulokinase, chloroplastic (Arabidopsis thaliana (Mouse-ear cress)).